Reading from the N-terminus, the 297-residue chain is Esterase LipU (297 aa).

Catalysis depends on residues S140, E239, and H269.

It belongs to the 'GDXG' lipolytic enzyme family.

It is found in the secreted. The enzyme catalyses a fatty acid ester + H2O = an aliphatic alcohol + a fatty acid + H(+). It carries out the reaction a butanoate ester + H2O = an aliphatic alcohol + butanoate + H(+). It catalyses the reaction an acetyl ester + H2O = an aliphatic alcohol + acetate + H(+). The catalysed reaction is decanoate ester + H2O = decanoate + an aliphatic alcohol + H(+). The enzyme catalyses an octanoate ester + H2O = an aliphatic alcohol + octanoate + H(+). It carries out the reaction a dodecanoate ester + H2O = an aliphatic alcohol + dodecanoate + H(+). It catalyses the reaction hexadecanoate ester + H2O = an aliphatic alcohol + hexadecanoate + H(+). With respect to regulation, inhibited by the ionic detergent SDS and by the serine protease inhibitor PMSF. Inhibited by the FDA approved drugs Diosmin, Acarbose and Ouabain. These drugs remain bound in the active site pocket and could be probable drug candidates to combat TB disease. In terms of biological role, esterase that shows preference for short chain fatty acids. Contributes to the growth of M.tuberculosis during the nutritive stress. Elicits strong humoral response in both extrapulmonary and relapsed cases of tuberculosis patients. The polypeptide is Esterase LipU (Mycobacterium tuberculosis (strain ATCC 25618 / H37Rv)).